Reading from the N-terminus, the 300-residue chain is Energy-coupling factor transporter ATP-binding protein EcfA2 (300 aa).

Positions Ile3–Leu258 constitute an ABC transporter domain. Gly40–Thr47 is a binding site for ATP.

Belongs to the ABC transporter superfamily. Energy-coupling factor EcfA family. In terms of assembly, forms a stable energy-coupling factor (ECF) transporter complex composed of 2 membrane-embedded substrate-binding proteins (S component), 2 ATP-binding proteins (A component) and 2 transmembrane proteins (T component).

Its subcellular location is the cell membrane. Functionally, ATP-binding (A) component of a common energy-coupling factor (ECF) ABC-transporter complex. Unlike classic ABC transporters this ECF transporter provides the energy necessary to transport a number of different substrates. This chain is Energy-coupling factor transporter ATP-binding protein EcfA2, found in Mesomycoplasma hyopneumoniae (strain 232) (Mycoplasma hyopneumoniae).